A 532-amino-acid polypeptide reads, in one-letter code: O-phosphoserine--tRNA(Cys) ligase (532 aa).

Residues 186–188 (HMT), 231–233 (SAS), 273–274 (YY), and Asn-317 contribute to the substrate site.

It belongs to the class-II aminoacyl-tRNA synthetase family. O-phosphoseryl-tRNA(Cys) synthetase subfamily. As to quaternary structure, homotetramer. Interacts with SepCysS.

It catalyses the reaction tRNA(Cys) + O-phospho-L-serine + ATP = O-phospho-L-seryl-tRNA(Cys) + AMP + diphosphate. Catalyzes the attachment of O-phosphoserine (Sep) to tRNA(Cys). This chain is O-phosphoserine--tRNA(Cys) ligase, found in Methanothermobacter thermautotrophicus (strain ATCC 29096 / DSM 1053 / JCM 10044 / NBRC 100330 / Delta H) (Methanobacterium thermoautotrophicum).